The sequence spans 207 residues: ATP-dependent dethiobiotin synthetase BioD (207 aa).

Asp-11–Phe-16 provides a ligand contact to ATP. A Mg(2+)-binding site is contributed by Thr-15. The active site involves Lys-31. Position 35 (Ser-35) interacts with substrate. ATP-binding positions include Asp-42, Glu-95–Gly-98, and Asn-155–Gln-156. Residues Asp-42 and Glu-95 each contribute to the Mg(2+) site.

This sequence belongs to the dethiobiotin synthetase family. Homodimer. Mg(2+) is required as a cofactor.

It localises to the cytoplasm. It catalyses the reaction (7R,8S)-7,8-diammoniononanoate + CO2 + ATP = (4R,5S)-dethiobiotin + ADP + phosphate + 3 H(+). Its pathway is cofactor biosynthesis; biotin biosynthesis; biotin from 7,8-diaminononanoate: step 1/2. Its function is as follows. Catalyzes a mechanistically unusual reaction, the ATP-dependent insertion of CO2 between the N7 and N8 nitrogen atoms of 7,8-diaminopelargonic acid (DAPA, also called 7,8-diammoniononanoate) to form a ureido ring. This is ATP-dependent dethiobiotin synthetase BioD from Chlamydia abortus (strain DSM 27085 / S26/3) (Chlamydophila abortus).